Here is a 404-residue protein sequence, read N- to C-terminus: MSVTLDLSRMAPSMSKEGGDAPKALINLSGLTRAQLLVALTESGVAEHGKAKMRATQIFRWMHHRGVTDFALMTDVAKETRARLAERFTVSRPEVVERQVSKDGTRKWLIRMAPGIEVETVYIPSVGRAGALCVSSQVGCTLNCSFCHTGTQALVRNLTAAEIVAQVQIAKDDLAEWPSDKEDRLLSNIVFMGMGEPLYNLGHVADAIEIISDNEGIGISRRRITVSTSGVVPQLEALGDKTQAMLAISLHATNDALRDVLVPLNKKYPLEDLMAGVRAYPGLSNARRVTFEYVMLKGVNDSPDEARALVKLIKGIPAKINLIPFNPWPGTDYVCSDWAAIEAFGAILNKAGYSSPIRTPRGRDILAACGQLKSESEKVRASAMRKLSMAAMAGVLDDDDEAAA.

E119 acts as the Proton acceptor in catalysis. Residues 126–358 (VGRAGALCVS…NKAGYSSPIR (233 aa)) enclose the Radical SAM core domain. C133 and C369 are disulfide-bonded. [4Fe-4S] cluster is bound by residues C140, C144, and C147. S-adenosyl-L-methionine is bound by residues 195–196 (GE), S227, 249–251 (SLH), and N326. Residue C369 is the S-methylcysteine intermediate of the active site.

The protein belongs to the radical SAM superfamily. RlmN family. Requires [4Fe-4S] cluster as cofactor.

Its subcellular location is the cytoplasm. The catalysed reaction is adenosine(2503) in 23S rRNA + 2 reduced [2Fe-2S]-[ferredoxin] + 2 S-adenosyl-L-methionine = 2-methyladenosine(2503) in 23S rRNA + 5'-deoxyadenosine + L-methionine + 2 oxidized [2Fe-2S]-[ferredoxin] + S-adenosyl-L-homocysteine. It carries out the reaction adenosine(37) in tRNA + 2 reduced [2Fe-2S]-[ferredoxin] + 2 S-adenosyl-L-methionine = 2-methyladenosine(37) in tRNA + 5'-deoxyadenosine + L-methionine + 2 oxidized [2Fe-2S]-[ferredoxin] + S-adenosyl-L-homocysteine. In terms of biological role, specifically methylates position 2 of adenine 2503 in 23S rRNA and position 2 of adenine 37 in tRNAs. m2A2503 modification seems to play a crucial role in the proofreading step occurring at the peptidyl transferase center and thus would serve to optimize ribosomal fidelity. This chain is Dual-specificity RNA methyltransferase RlmN, found in Caulobacter sp. (strain K31).